The primary structure comprises 232 residues: Histone H1-II (232 aa).

Positions 1–18 (MSDPAPEVAPAAPVASPA) are enriched in low complexity. Disordered stretches follow at residues 1-44 (MSDP…PPVS) and 103-232 (GKGA…AKKA). The region spanning 39 to 114 (THPPVSEMVV…GASGSFKLPA (76 aa)) is the H15 domain. 2 stretches are compositionally biased toward basic residues: residues 149 to 171 (SIAK…KSTK) and 179 to 232 (AAKK…AKKA).

Belongs to the histone H1/H5 family.

It localises to the nucleus. It is found in the chromosome. Its function is as follows. Histones H1 are necessary for the condensation of nucleosome chains into higher-order structures. This is Histone H1-II from Glyptotendipes barbipes (Midge).